Consider the following 74-residue polypeptide: MASSGVTVSAAGSASEASEVPDNVGDWLRGVFRFATDRNDFRRNLILNLGLFAAGVWLARNLSDIDLMAPQPGV.

Residues 1–20 show a composition bias toward low complexity; sequence MASSGVTVSAAGSASEASEV. The interval 1 to 21 is disordered; that stretch reads MASSGVTVSAAGSASEASEVP. At Ala2 the chain carries N-acetylalanine.

The protein belongs to the Tom6 family. Forms part of the preprotein translocase complex of the outer mitochondrial membrane (TOM complex) which consists of at least 7 different proteins (TOMM5, TOMM6, TOMM7, TOMM20, TOMM22, TOMM40 and TOMM70).

The protein resides in the mitochondrion outer membrane. The polypeptide is Mitochondrial import receptor subunit TOM6 homolog (Tomm6) (Mus musculus (Mouse)).